The sequence spans 407 residues: MTETTSKTAPWTVEKRTAILVLADGTVIEGKGLGAIGAIEAEVVFNTALTGYEEILTDPSYAGQIVTFTFPHIGNVGTNAEDVEDLTPANRHGAVGAIFKADITSPSNFRATEDLDAWLKNRGVIALAGIDTRALTSLIRERGAQNAVIAHDPSGKFDLEALKARAAAWSGLENLDLAKDVTVGQSLTWKETPWTLADGYGEQDTPEYHVVALDFGVKRNILRLLTGLGAKVTVLPATATAEDVLAHNPDGVFLSNGPGDPAATGAYAVPTIKKLVETDLPVFGICLGHQMLALALGGRTEKMHQGHHGANHPVKDYTTGKVEIVSMNHGFAVDSDSLPENVEETHVSLFDGTNCGLRVVGKPVFSVQHHPEASPGPQDSHYLFRRFINLIREKKGETPLPEREQAA.

The segment at 1–205 (MTETTSKTAP…LADGYGEQDT (205 aa)) is CPSase. Residues Ser60, Gly257, and Gly259 each coordinate L-glutamine. Residues 209 to 397 (HVVALDFGVK…INLIREKKGE (189 aa)) enclose the Glutamine amidotransferase type-1 domain. Cys286 acts as the Nucleophile in catalysis. Residues Leu287, Gln290, Asn328, Gly330, and Phe331 each contribute to the L-glutamine site. Catalysis depends on residues His370 and Glu372.

It belongs to the CarA family. As to quaternary structure, composed of two chains; the small (or glutamine) chain promotes the hydrolysis of glutamine to ammonia, which is used by the large (or ammonia) chain to synthesize carbamoyl phosphate. Tetramer of heterodimers (alpha,beta)4.

The enzyme catalyses hydrogencarbonate + L-glutamine + 2 ATP + H2O = carbamoyl phosphate + L-glutamate + 2 ADP + phosphate + 2 H(+). The catalysed reaction is L-glutamine + H2O = L-glutamate + NH4(+). Its pathway is amino-acid biosynthesis; L-arginine biosynthesis; carbamoyl phosphate from bicarbonate: step 1/1. It functions in the pathway pyrimidine metabolism; UMP biosynthesis via de novo pathway; (S)-dihydroorotate from bicarbonate: step 1/3. Small subunit of the glutamine-dependent carbamoyl phosphate synthetase (CPSase). CPSase catalyzes the formation of carbamoyl phosphate from the ammonia moiety of glutamine, carbonate, and phosphate donated by ATP, constituting the first step of 2 biosynthetic pathways, one leading to arginine and/or urea and the other to pyrimidine nucleotides. The small subunit (glutamine amidotransferase) binds and cleaves glutamine to supply the large subunit with the substrate ammonia. This chain is Carbamoyl phosphate synthase small chain, found in Brucella anthropi (strain ATCC 49188 / DSM 6882 / CCUG 24695 / JCM 21032 / LMG 3331 / NBRC 15819 / NCTC 12168 / Alc 37) (Ochrobactrum anthropi).